A 317-amino-acid polypeptide reads, in one-letter code: Serpentine receptor class delta-46 (317 aa).

7 helical membrane passes run Phe-9–Ile-29, Ile-42–Ala-62, Tyr-91–Val-111, Val-129–Ile-149, Gln-185–Leu-205, Ala-239–Thr-259, and Phe-269–Val-289.

Belongs to the nematode receptor-like protein srd family.

The protein localises to the membrane. The chain is Serpentine receptor class delta-46 (srd-46) from Caenorhabditis elegans.